The primary structure comprises 256 residues: Nuclear shuttle protein (256 aa).

Residues His21–Tyr42 carry the Bipartite nuclear localization signal motif. Positions Ser81–Leu96 match the Nuclear localization signal motif. The interval Glu150 to Asp187 is interaction with Arabidopsis thaliana NSI protein.

Belongs to the begomovirus nuclear shuttle protein family. As to quaternary structure, binds to single-stranded and double-stranded viral DNA. Interacts with the host nuclear shuttle interacting (NSI) protein. This interaction may allow NSP to recruit NSI monomers to the viral genome and thus regulate nuclear export of viral genome by NSP.

The protein localises to the host nucleus. It is found in the host cytoplasm. Its subcellular location is the host cell membrane. In terms of biological role, binds to the genomic viral ssDNA, shuttles it into and out of the cell nucleus. Begomoviruses use 2 proteins to transport their DNA from cell to cell. The nuclear shuttle protein (NSP) shuttles it between nucleus and cytoplasm and the movement protein (MP) probably transports the DNA-NSP complex to the cell periphery and facilitates movement across the cell wall. The sequence is that of Nuclear shuttle protein from Solanum lycopersicum (Tomato).